The sequence spans 665 residues: RNA-directed RNA polymerase (665 aa).

The enzyme catalyses RNA(n) + a ribonucleoside 5'-triphosphate = RNA(n+1) + diphosphate. Its function is as follows. RNA-dependent RNA polymerase which replicates the viral genome. In Atkinsonella hypoxylon (AhV), this protein is RNA-directed RNA polymerase.